Here is a 178-residue protein sequence, read N- to C-terminus: Large ribosomal subunit protein uL6 (178 aa).

It belongs to the universal ribosomal protein uL6 family. Part of the 50S ribosomal subunit.

Functionally, this protein binds to the 23S rRNA, and is important in its secondary structure. It is located near the subunit interface in the base of the L7/L12 stalk, and near the tRNA binding site of the peptidyltransferase center. The polypeptide is Large ribosomal subunit protein uL6 (Maridesulfovibrio salexigens (strain ATCC 14822 / DSM 2638 / NCIMB 8403 / VKM B-1763) (Desulfovibrio salexigens)).